Reading from the N-terminus, the 701-residue chain is Putative pentatricopeptide repeat-containing protein At3g25970 (701 aa).

PPR repeat units lie at residues 34-64 (DIYV…MPKR), 65-99 (DSVS…GSDV), 100-134 (DGYS…GYEC), 135-165 (NVYV…ISEP), 166-200 (NSVS…AAVT), 202-236 (DAGT…GLQH), 237-267 (EITI…LGGS), 269-303 (DLIS…WVET), 304-338 (DIYT…GLEQ), 339-371 (VTSA…LKSK), 372-406 (DLIS…EIKV), 407-441 (DDYA…GFVS), 442-472 (NEFV…ISSK), 474-508 (STVA…NVKL), 509-539 (DHVT…MEPV), and 545-575 (RMEH…MPLN). Residues 580–655 (VLKTFLGVCR…VPGWSWIEIR (76 aa)) form a type E motif region. Positions 656–686 (NQVKAFNAEDRSNPLCQDIYMMIKDLTQEMQ) are type E(+) motif.

This sequence belongs to the PPR family. PCMP-E subfamily.

In Arabidopsis thaliana (Mouse-ear cress), this protein is Putative pentatricopeptide repeat-containing protein At3g25970 (PCMP-E46).